The sequence spans 89 residues: HssA/B-like protein 14 (89 aa).

Belongs to the hssA/B family.

This Dictyostelium discoideum (Social amoeba) protein is HssA/B-like protein 14 (hssl14).